A 140-amino-acid chain; its full sequence is Small ribosomal subunit protein uS12 (140 aa).

A 3-methylthioaspartic acid modification is found at Asp102.

Belongs to the universal ribosomal protein uS12 family. As to quaternary structure, part of the 30S ribosomal subunit. Contacts proteins S8 and S17. May interact with IF1 in the 30S initiation complex.

Its function is as follows. With S4 and S5 plays an important role in translational accuracy. Interacts with and stabilizes bases of the 16S rRNA that are involved in tRNA selection in the A site and with the mRNA backbone. Located at the interface of the 30S and 50S subunits, it traverses the body of the 30S subunit contacting proteins on the other side and probably holding the rRNA structure together. The combined cluster of proteins S8, S12 and S17 appears to hold together the shoulder and platform of the 30S subunit. The chain is Small ribosomal subunit protein uS12 from Bacillus cytotoxicus (strain DSM 22905 / CIP 110041 / 391-98 / NVH 391-98).